The chain runs to 271 residues: Tryptophan synthase alpha chain (271 aa).

Residues E56 and D67 each act as proton acceptor in the active site.

The protein belongs to the TrpA family. In terms of assembly, tetramer of two alpha and two beta chains.

The catalysed reaction is (1S,2R)-1-C-(indol-3-yl)glycerol 3-phosphate + L-serine = D-glyceraldehyde 3-phosphate + L-tryptophan + H2O. It participates in amino-acid biosynthesis; L-tryptophan biosynthesis; L-tryptophan from chorismate: step 5/5. In terms of biological role, the alpha subunit is responsible for the aldol cleavage of indoleglycerol phosphate to indole and glyceraldehyde 3-phosphate. In Mycobacterium avium (strain 104), this protein is Tryptophan synthase alpha chain.